The sequence spans 363 residues: Phosphoserine aminotransferase (363 aa).

Residue Arg-42 coordinates L-glutamate. Pyridoxal 5'-phosphate-binding positions include 76–77 (AR), Trp-104, Thr-155, Asp-175, and Gln-198. An N6-(pyridoxal phosphate)lysine modification is found at Lys-199. Position 240 to 241 (240 to 241 (NT)) interacts with pyridoxal 5'-phosphate.

The protein belongs to the class-V pyridoxal-phosphate-dependent aminotransferase family. SerC subfamily. Homodimer. Requires pyridoxal 5'-phosphate as cofactor.

The protein resides in the cytoplasm. It carries out the reaction O-phospho-L-serine + 2-oxoglutarate = 3-phosphooxypyruvate + L-glutamate. The catalysed reaction is 4-(phosphooxy)-L-threonine + 2-oxoglutarate = (R)-3-hydroxy-2-oxo-4-phosphooxybutanoate + L-glutamate. It participates in amino-acid biosynthesis; L-serine biosynthesis; L-serine from 3-phospho-D-glycerate: step 2/3. It functions in the pathway cofactor biosynthesis; pyridoxine 5'-phosphate biosynthesis; pyridoxine 5'-phosphate from D-erythrose 4-phosphate: step 3/5. Catalyzes the reversible conversion of 3-phosphohydroxypyruvate to phosphoserine and of 3-hydroxy-2-oxo-4-phosphonooxybutanoate to phosphohydroxythreonine. This Edwardsiella ictaluri (strain 93-146) protein is Phosphoserine aminotransferase (serC).